We begin with the raw amino-acid sequence, 71 residues long: Translation initiation factor IF-1 (71 aa).

The 71-residue stretch at methionine 1–histidine 71 folds into the S1-like domain.

This sequence belongs to the IF-1 family. In terms of assembly, component of the 30S ribosomal translation pre-initiation complex which assembles on the 30S ribosome in the order IF-2 and IF-3, IF-1 and N-formylmethionyl-tRNA(fMet); mRNA recruitment can occur at any time during PIC assembly.

Its subcellular location is the cytoplasm. One of the essential components for the initiation of protein synthesis. Stabilizes the binding of IF-2 and IF-3 on the 30S subunit to which N-formylmethionyl-tRNA(fMet) subsequently binds. Helps modulate mRNA selection, yielding the 30S pre-initiation complex (PIC). Upon addition of the 50S ribosomal subunit IF-1, IF-2 and IF-3 are released leaving the mature 70S translation initiation complex. In Rickettsia akari (strain Hartford), this protein is Translation initiation factor IF-1.